A 346-amino-acid chain; its full sequence is tRNA N6-adenosine threonylcarbamoyltransferase (346 aa).

Residues His-110 and His-114 each contribute to the Fe cation site. Substrate-binding positions include 132–136 (LLSGG), Asp-165, Gly-178, and Asn-274. Asp-298 serves as a coordination point for Fe cation.

This sequence belongs to the KAE1 / TsaD family. The cofactor is Fe(2+).

The protein localises to the cytoplasm. The catalysed reaction is L-threonylcarbamoyladenylate + adenosine(37) in tRNA = N(6)-L-threonylcarbamoyladenosine(37) in tRNA + AMP + H(+). In terms of biological role, required for the formation of a threonylcarbamoyl group on adenosine at position 37 (t(6)A37) in tRNAs that read codons beginning with adenine. Is involved in the transfer of the threonylcarbamoyl moiety of threonylcarbamoyl-AMP (TC-AMP) to the N6 group of A37, together with TsaE and TsaB. TsaD likely plays a direct catalytic role in this reaction. This is tRNA N6-adenosine threonylcarbamoyltransferase from Borreliella burgdorferi (strain ATCC 35210 / DSM 4680 / CIP 102532 / B31) (Borrelia burgdorferi).